Consider the following 193-residue polypeptide: MIVLGVDPGLTRCGVGVIEAGAYRRLSFIHVDVVRSDPHESQDLRLLKIYDGLCAKMDEFIPDTVSIERVFAQENRNTVLGTAQAAGMAMLAAAQRGIPVALHTPTESKMAITGNGKAEKIQMERMVARILNLNALPTPADAADALAIAICHALRPSGALEGGEREQHLTPAQRQWAQATQHATRRRGVRRGM.

Active-site residues include Asp-7, Glu-68, and Asp-141. Mg(2+) contacts are provided by Asp-7, Glu-68, and Asp-141. The disordered stretch occupies residues 174 to 193 (RQWAQATQHATRRRGVRRGM). Basic residues predominate over residues 183 to 193 (ATRRRGVRRGM).

This sequence belongs to the RuvC family. In terms of assembly, homodimer which binds Holliday junction (HJ) DNA. The HJ becomes 2-fold symmetrical on binding to RuvC with unstacked arms; it has a different conformation from HJ DNA in complex with RuvA. In the full resolvosome a probable DNA-RuvA(4)-RuvB(12)-RuvC(2) complex forms which resolves the HJ. It depends on Mg(2+) as a cofactor.

It is found in the cytoplasm. The catalysed reaction is Endonucleolytic cleavage at a junction such as a reciprocal single-stranded crossover between two homologous DNA duplexes (Holliday junction).. Its function is as follows. The RuvA-RuvB-RuvC complex processes Holliday junction (HJ) DNA during genetic recombination and DNA repair. Endonuclease that resolves HJ intermediates. Cleaves cruciform DNA by making single-stranded nicks across the HJ at symmetrical positions within the homologous arms, yielding a 5'-phosphate and a 3'-hydroxyl group; requires a central core of homology in the junction. The consensus cleavage sequence is 5'-(A/T)TT(C/G)-3'. Cleavage occurs on the 3'-side of the TT dinucleotide at the point of strand exchange. HJ branch migration catalyzed by RuvA-RuvB allows RuvC to scan DNA until it finds its consensus sequence, where it cleaves and resolves the cruciform DNA. This chain is Crossover junction endodeoxyribonuclease RuvC, found in Bifidobacterium animalis subsp. lactis (strain AD011).